The sequence spans 118 residues: Autophagy-related protein 8 (118 aa).

Glycine 116 is lipidated: Phosphatidylethanolamine amidated glycine. The propeptide at 117–118 (EA) is removed in mature form.

This sequence belongs to the ATG8 family. In terms of assembly, conjugation to phosphatidylethanolamine (PE) leads to homodimerization. Interacts with ATG1, ATG3, ATG4, ATG7 and ATG12. Post-translationally, the C-terminal Glu-117 and Ala-118 residues of ATG8 are removed by ATG4 to expose Gly-116 at the C-terminus. This Gly-116 forms then a thioester bond with the 'Cys-550' of ATG7 (E1-like activating enzyme) before being transferred to the 'Cys-244' of ATG3 (the specific E2 conjugating enzyme), in order to be finally amidated with phosphatidylethanolamine. This lipid modification anchors ATG8 to membranes and can be reversed by ATG4, releasing soluble ATG8.

The protein resides in the cytoplasmic vesicle. Its subcellular location is the cvt vesicle membrane. It localises to the autophagosome membrane. It is found in the vacuole membrane. Its function is as follows. Ubiquitin-like modifier involved in cytoplasm to vacuole transport (Cvt) vesicles and autophagosome formation. With ATG4, mediates the delivery of the vesicles and autophagosomes to the vacuole via the microtubule cytoskeleton. Required for selective autophagic degradation of the nucleus (nucleophagy) as well as for mitophagy which contributes to regulate mitochondrial quantity and quality by eliminating the mitochondria to a basal level to fulfill cellular energy requirements and preventing excess ROS production. Also participates in membrane fusion events that take place in the early secretory pathway. Also involved in endoplasmic reticulum-specific autophagic process and is essential for the survival of cells subjected to severe ER stress. The ATG8-PE conjugate mediates tethering between adjacent membranes and stimulates membrane hemifusion, leading to expansion of the autophagosomal membrane during autophagy. Moreover not only conjugation, but also subsequent ATG8-PE deconjugation is an important step required to facilitate multiple events during macroautophagy, and especially for efficient autophagosome biogenesis, the assembly of ATG9-containing tubulovesicular clusters into phagophores/autophagosomes, and for the disassembly of PAS-associated ATG components. Autophagy is required for proper vegetative growth, asexual/sexual reproduction, and full virulence. Autophagy is particularly involved in the biosynthesis of deoxynivalenol (DON), an important virulence determinant. The polypeptide is Autophagy-related protein 8 (Gibberella zeae (strain ATCC MYA-4620 / CBS 123657 / FGSC 9075 / NRRL 31084 / PH-1) (Wheat head blight fungus)).